Reading from the N-terminus, the 185-residue chain is Endoribonuclease YbeY (185 aa).

3 residues coordinate Zn(2+): H142, H146, and H152.

The protein belongs to the endoribonuclease YbeY family. The cofactor is Zn(2+).

The protein localises to the cytoplasm. Single strand-specific metallo-endoribonuclease involved in late-stage 70S ribosome quality control and in maturation of the 3' terminus of the 16S rRNA. The sequence is that of Endoribonuclease YbeY from Parvibaculum lavamentivorans (strain DS-1 / DSM 13023 / NCIMB 13966).